We begin with the raw amino-acid sequence, 312 residues long: Pantothenate kinase (312 aa).

Residue 92–99 coordinates ATP; sequence GSVAVGKS.

This sequence belongs to the prokaryotic pantothenate kinase family.

The protein resides in the cytoplasm. It catalyses the reaction (R)-pantothenate + ATP = (R)-4'-phosphopantothenate + ADP + H(+). It participates in cofactor biosynthesis; coenzyme A biosynthesis; CoA from (R)-pantothenate: step 1/5. This chain is Pantothenate kinase (coaA), found in Vibrio cholerae serotype O1 (strain ATCC 39315 / El Tor Inaba N16961).